The chain runs to 679 residues: Methionine--tRNA ligase (679 aa).

Positions proline 14–histidine 24 match the 'HIGH' region motif. Residues cysteine 145, cysteine 148, cysteine 158, and cysteine 161 each coordinate Zn(2+). The short motif at lysine 331–serine 335 is the 'KMSKS' region element. Lysine 334 contacts ATP. The tRNA-binding domain maps to threonine 577–lysine 679.

The protein belongs to the class-I aminoacyl-tRNA synthetase family. MetG type 1 subfamily. Homodimer. The cofactor is Zn(2+).

It is found in the cytoplasm. It carries out the reaction tRNA(Met) + L-methionine + ATP = L-methionyl-tRNA(Met) + AMP + diphosphate. In terms of biological role, is required not only for elongation of protein synthesis but also for the initiation of all mRNA translation through initiator tRNA(fMet) aminoacylation. This is Methionine--tRNA ligase from Pseudomonas entomophila (strain L48).